The primary structure comprises 494 residues: 4-hydroxyphenylacetate 3-monooxygenase oxygenase component (494 aa).

Substrate is bound by residues R103–Y107 and H149. Residues H149–L151, Q155–R158, and T192 contribute to the FAD site. Substrate is bound at residue S205 to T206. D455–R458 provides a ligand contact to FAD.

The protein belongs to the FADH(2)-utilizing monooxygenase family. 4-HPA 3-monooxygenase consists of a reductase component HpaI and an oxygenase component HpaH.

It carries out the reaction 4-hydroxyphenylacetate + FADH2 + O2 = 3,4-dihydroxyphenylacetate + FAD + H2O + H(+). It participates in aromatic compound metabolism; 4-hydroxyphenylacetate degradation; pyruvate and succinate semialdehyde from 4-hydroxyphenylacetate: step 1/7. Functionally, utilizes FADH(2) supplied by HpaI, to catalyze the hydroxylation of 4-hydroxyphenylacetic acid, leading to the production of 3,4-dihydroxyphenylacetic acid (DHPA). The protein is 4-hydroxyphenylacetate 3-monooxygenase oxygenase component (hpaH) of Geobacillus sp. (strain PA-9).